A 281-amino-acid chain; its full sequence is RNA polymerase sigma factor RpoH (281 aa).

Residues 52–121 (LILSHLRFVI…IHEYVLRNWR (70 aa)) are sigma-70 factor domain-2. The Interaction with polymerase core subunit RpoC signature appears at 76-79 (DLIQ). Residues 226-277 (ALQSLDARSQDIIKARWLDDNKATLHDLAAKYNVSAERIRQLETNALKKLKS) form a sigma-70 factor domain-4 region. Residues 250–269 (LHDLAAKYNVSAERIRQLET) constitute a DNA-binding region (H-T-H motif).

The protein belongs to the sigma-70 factor family. RpoH subfamily. Interacts with the RNA polymerase core enzyme.

It localises to the cytoplasm. Sigma factors are initiation factors that promote the attachment of RNA polymerase to specific initiation sites and are then released. This sigma factor is involved in regulation of expression of heat shock genes. This is RNA polymerase sigma factor RpoH from Haemophilus influenzae (strain ATCC 51907 / DSM 11121 / KW20 / Rd).